The sequence spans 115 residues: Nucleoid-associated protein Ccel_0243 (115 aa).

It belongs to the YbaB/EbfC family. Homodimer.

It localises to the cytoplasm. Its subcellular location is the nucleoid. Binds to DNA and alters its conformation. May be involved in regulation of gene expression, nucleoid organization and DNA protection. This is Nucleoid-associated protein Ccel_0243 from Ruminiclostridium cellulolyticum (strain ATCC 35319 / DSM 5812 / JCM 6584 / H10) (Clostridium cellulolyticum).